We begin with the raw amino-acid sequence, 420 residues long: 4-hydroxy-3-methylbut-2-en-1-yl diphosphate synthase (flavodoxin) (420 aa).

Residues C307, C310, C353, and E360 each contribute to the [4Fe-4S] cluster site.

The protein belongs to the IspG family. It depends on [4Fe-4S] cluster as a cofactor.

The enzyme catalyses (2E)-4-hydroxy-3-methylbut-2-enyl diphosphate + oxidized [flavodoxin] + H2O + 2 H(+) = 2-C-methyl-D-erythritol 2,4-cyclic diphosphate + reduced [flavodoxin]. It functions in the pathway isoprenoid biosynthesis; isopentenyl diphosphate biosynthesis via DXP pathway; isopentenyl diphosphate from 1-deoxy-D-xylulose 5-phosphate: step 5/6. Converts 2C-methyl-D-erythritol 2,4-cyclodiphosphate (ME-2,4cPP) into 1-hydroxy-2-methyl-2-(E)-butenyl 4-diphosphate. This chain is 4-hydroxy-3-methylbut-2-en-1-yl diphosphate synthase (flavodoxin), found in Brucella suis biovar 1 (strain 1330).